The sequence spans 159 residues: Thioredoxin O2, mitochondrial (159 aa).

Phosphoserine is present on S40. In terms of domain architecture, Thioredoxin spans 43 to 159; that stretch reads FAEGDRSSFV…LKSVMEQLYK (117 aa). Active-site nucleophile residues include C83 and C86. C83 and C86 are oxidised to a cystine.

Belongs to the thioredoxin family. Plant O-type subfamily.

It is found in the mitochondrion. Thiol-disulfide oxidoreductase that may participate in various redox reactions. Possesses insulin disulfide bonds reducing activity. Reduced by thioredoxin reductases NTRA and NTRB. The protein is Thioredoxin O2, mitochondrial of Arabidopsis thaliana (Mouse-ear cress).